The sequence spans 453 residues: GTPase Der (453 aa).

2 consecutive EngA-type G domains span residues P4–D169 and I178–R353. GTP contacts are provided by residues G10–S17, D57–L61, N120–E123, G184–S191, D231–I235, and N296–D299. The KH-like domain occupies R354–K439.

It belongs to the TRAFAC class TrmE-Era-EngA-EngB-Septin-like GTPase superfamily. EngA (Der) GTPase family. In terms of assembly, associates with the 50S ribosomal subunit.

Its function is as follows. GTPase that plays an essential role in the late steps of ribosome biogenesis. This chain is GTPase Der, found in Cyanothece sp. (strain PCC 7425 / ATCC 29141).